The chain runs to 917 residues: Autophagy-related protein 9 (917 aa).

Residues 1–226 (MASNIFSRLV…AGFWCIIVQR (226 aa)) lie on the Cytoplasmic side of the membrane. Disordered stretches follow at residues 16 to 37 (RSFY…RAGI) and 119 to 177 (LLLS…QGRP). A helical membrane pass occupies residues 227-247 (ILELVNAAFVAVFLTFLSQCV). Residues 248–275 (DYHKLPHSKKMEDIIIPKCTQNMSLVWN) are Lumenal-facing. Asparagine 269 carries an N-linked (GlcNAc...) asparagine glycan. The helical transmembrane segment at 276–296 (VGLWLFAIYFICRCFGLIIQL) threads the bilayer. Over 297-442 (RQLKHLRDFY…RQLSQKLKSR (146 aa)) the chain is Cytoplasmic. Residues 443-463 (FFFAGLMIFVMSPFIALYLIL) lie within the membrane without spanning it. Topologically, residues 464–539 (VYFLTYFHEF…ARTVSFITGS (76 aa)) are cytoplasmic. The chain crosses the membrane as a helical span at residues 540–560 (IVAVLGLATIFDSEAFLTFEI). The Lumenal portion of the chain corresponds to 561-564 (TPDR). Residues 565–585 (SVLFYVSILATLWAVARGNIS) form a helical membrane-spanning segment. The Cytoplasmic portion of the chain corresponds to 586–633 (DDNEVYDPEFAMKSIIEFTHYEPDHWRGRLHSTEVKNEFSELYKPRPQ). N6-acetyllysine is present on lysine 621. Residues 634–654 (IFLEEILSILLTPLVLLVSLP) lie within the membrane without spanning it. The Cytoplasmic segment spans residues 655 to 917 (NSTDQIVDFF…FQQAHMHLRR (263 aa)). The disordered stretch occupies residues 854–895 (DARFGKLGDEDIDESGGALDESTWQTSPTKTLSRENSGANPQ). The span at 875–895 (STWQTSPTKTLSRENSGANPQ) shows a compositional bias: polar residues.

Belongs to the ATG9 family. As to quaternary structure, homotrimer; forms a homotrimer with a central pore that forms a path between the two membrane leaflets. Interacts with HAT1. Post-translationally, acetylated by HAT1 at Lys-621, which increases the ability to bind vesicles during nutrient starvation induction. In terms of processing, phosphorylated by ATG1. ATG1 phosphorylation is required for preautophagosome elongation.

It is found in the preautophagosomal structure membrane. The protein localises to the cytoplasmic vesicle membrane. It localises to the vacuole membrane. Its subcellular location is the golgi apparatus membrane. The protein resides in the endoplasmic reticulum membrane. The catalysed reaction is a 1,2-diacyl-sn-glycero-3-phosphocholine(in) = a 1,2-diacyl-sn-glycero-3-phosphocholine(out). The enzyme catalyses a 1,2-diacyl-sn-glycero-3-phospho-L-serine(in) = a 1,2-diacyl-sn-glycero-3-phospho-L-serine(out). It carries out the reaction a 1,2-diacyl-sn-glycero-3-phosphoethanolamine(in) = a 1,2-diacyl-sn-glycero-3-phosphoethanolamine(out). It catalyses the reaction a 1,2-diacyl-sn-glycero-3-phospho-(1D-myo-inositol-3-phosphate)(in) = a 1,2-diacyl-sn-glycero-3-phospho-(1D-myo-inositol-3-phosphate)(out). Phospholipid scramblase involved in autophagy and cytoplasm to vacuole transport (Cvt) vesicle formation. Cycles between the preautophagosomal structure/phagophore assembly site (PAS) and the cytoplasmic vesicle pool and supplies membrane for the growing autophagosome. Lipid scramblase activity plays a key role in preautophagosomal structure/phagophore assembly by distributing the phospholipids that arrive through ATG2 from the cytoplasmic to the luminal leaflet of the bilayer, thereby driving autophagosomal membrane expansion. Required for mitophagy. Also involved in endoplasmic reticulum-specific autophagic process and is essential for the survival of cells subjected to severe ER stress. Different machineries are required for anterograde trafficking to the PAS during either the Cvt pathway or bulk autophagy and for retrograde trafficking. Plays a role in appressorium formation and pathogenicity. This chain is Autophagy-related protein 9, found in Pyricularia oryzae (strain 70-15 / ATCC MYA-4617 / FGSC 8958) (Rice blast fungus).